The following is a 54-amino-acid chain: MAVPKKRTSISKKRIRKNIWKRKGYWAALKALSLGKSLSTGNSKGFFVRQTNKS.

Belongs to the bacterial ribosomal protein bL32 family.

The protein resides in the plastid. It is found in the chloroplast. This is Large ribosomal subunit protein bL32c from Panax ginseng (Korean ginseng).